Reading from the N-terminus, the 517-residue chain is FERM domain-containing protein 5 (517 aa).

In terms of domain architecture, FERM spans 17–298 (YSCTVRLLDD…ENQAFYKLEK (282 aa)). The segment at 308–353 (SNLFFKGSRFRYSGRVAKEVMESSAKIKREPPEIHRAGMVPSRSCP) is interaction with ROCK1. The segment at 344 to 367 (AGMVPSRSCPSITHGPRLSSVPRT) is disordered. Phosphoserine is present on Ser-375. 2 disordered regions span residues 385 to 408 (DSAH…VRSS) and 485 to 517 (GHGG…VPLD). Positions 388-398 (HSTPVRSSSHG) are enriched in polar residues. Over residues 498-517 (KGPQLQQQQWKGWGKSVPLD) the composition is skewed to low complexity.

In terms of assembly, interacts with CTNND1, ITGB5 (via cytoplasmic domain) and ROCK1.

It localises to the cell junction. It is found in the adherens junction. Functionally, may be involved in regulation of cell migration. May regulate cell-matrix interactions via its interaction with ITGB5 and modifying ITGB5 cytoplasmic tail interactions such as with FERMT2 and TLN1. May regulate ROCK1 kinase activity possibly involved in regulation of actin stress fiber formation. The protein is FERM domain-containing protein 5 (Frmd5) of Mus musculus (Mouse).